The primary structure comprises 301 residues: Transcriptional activator FeaR (301 aa).

Positions 199–299 constitute an HTH araC/xylS-type domain; the sequence is QKVVTLIDDN…GMTPGEYRRK (101 aa). 2 consecutive DNA-binding regions (H-T-H motif) follow at residues 217 to 238 and 266 to 289; these read EWIA…ADKG and LAGI…KQRF.

In terms of biological role, positive regulator of tynA/maoA and feaB/padA, the genes for 2-phenylethylamine catabolism. In Escherichia coli (strain K12), this protein is Transcriptional activator FeaR (feaR).